The primary structure comprises 528 residues: Calcium-dependent protein kinase 17 (528 aa).

Residues 1-65 (MGNCCSHGRD…GPIGPVLGRP (65 aa)) are disordered. Gly2 carries the N-myristoyl glycine lipid modification. A compositionally biased stretch (low complexity) spans 20–45 (NGASASNAANSTGPTAEASVPQSKHA). One can recognise a Protein kinase domain in the interval 73–331 (YSLGKELGRG…AAQVLNHPWI (259 aa)). ATP is bound by residues 79-87 (LGRGQFGVT) and Lys102. Residue Asp197 is the Proton acceptor of the active site. Phosphoserine is present on Ser237. An autoinhibitory domain region spans residues 337–367 (APDVPLDNAVMSRLKQFKAMNNFKKVALRVI). 4 consecutive EF-hand domains span residues 374-409 (EEIMGLKEMFKGMDTDSSGTITLEELRQGLAKQGTR), 410-445 (LSEYEVQQLMEAADADGNGTIDYGEFIAATMHINRL), 446-481 (DREEHLYSAFQHFDKDNSGYITMEELEQALREFGMN), and 485-516 (DIKEIISEVDGDNDGRINYDEFVAMMRKGNPD). Residues Asp387, Asp389, Ser391, Thr393, Glu398, Asp423, Asp425, Asn427, Thr429, Glu434, Asp459, Asp461, Ser463, Tyr465, Glu470, Asp494, Asp496, Asp498, Arg500, and Glu505 each contribute to the Ca(2+) site.

This sequence belongs to the protein kinase superfamily. Ser/Thr protein kinase family. CDPK subfamily.

Its subcellular location is the membrane. It catalyses the reaction L-seryl-[protein] + ATP = O-phospho-L-seryl-[protein] + ADP + H(+). It carries out the reaction L-threonyl-[protein] + ATP = O-phospho-L-threonyl-[protein] + ADP + H(+). With respect to regulation, activated by calcium. Autophosphorylation may play an important role in the regulation of the kinase activity. Functionally, may play a role in signal transduction pathways that involve calcium as a second messenger. In Arabidopsis thaliana (Mouse-ear cress), this protein is Calcium-dependent protein kinase 17 (CPK17).